The primary structure comprises 214 residues: Serine protease inhibitor 2.1 (214 aa).

This sequence belongs to the serpin family.

The polypeptide is Serine protease inhibitor 2.1 (Rattus norvegicus (Rat)).